A 144-amino-acid chain; its full sequence is Large ribosomal subunit protein uL15 (144 aa).

A disordered region spans residues 1–25; that stretch reads MFLNTIGARDGSRPEKKRVGRGIGS.

The protein belongs to the universal ribosomal protein uL15 family. In terms of assembly, part of the 50S ribosomal subunit.

Its function is as follows. Binds to the 23S rRNA. The chain is Large ribosomal subunit protein uL15 from Methylococcus capsulatus (strain ATCC 33009 / NCIMB 11132 / Bath).